The following is a 150-amino-acid chain: UPF0178 protein AZOSEA36080 (150 aa).

It belongs to the UPF0178 family.

This is UPF0178 protein AZOSEA36080 from Aromatoleum aromaticum (strain DSM 19018 / LMG 30748 / EbN1) (Azoarcus sp. (strain EbN1)).